The sequence spans 23 residues: Phospholipase A1 verutoxin-1 (23 aa).

It belongs to the AB hydrolase superfamily. Lipase family. Contains six disulfide bonds. Expressed by the venom gland.

Its subcellular location is the secreted. It catalyses the reaction a 1,2-diacyl-sn-glycero-3-phosphocholine + H2O = a 2-acyl-sn-glycero-3-phosphocholine + a fatty acid + H(+). The enzyme catalyses 1-(9Z-octadecenoyl)-2-hexadecanoyl-sn-glycero-3-phosphocholine + H2O = 2-hexadecanoyl-sn-glycero-3-phosphocholine + (9Z)-octadecenoate + H(+). It carries out the reaction a 1-acyl-sn-glycero-3-phosphocholine + H2O = sn-glycerol 3-phosphocholine + a fatty acid + H(+). It participates in phospholipid metabolism. Activity is maximal in the presence of calcium. However, unlike phospholipases A2 whose catalytic activity is strictly calcium-dependent, this enzyme shows considerable catalytic activity on phosphatidylcholine emulsified in calcium free solution; the catalytic activity of VT-1 assayed in the absence of calcium ions is 18-20% of that assayed in solution containing calcium ions. Its function is as follows. Catalyzes the hydrolysis of glycerophospholipids such as phosphatidylcholine (1,2-diacyl-sn-glycero-3-phosphocholine) and has a moderate activity to hydrolyze lysoglycerophospholipids such as lysophosphatidylcholine (1-acyl-sn-glycero-3-phosphocholine), but is unable to hydrolyze sphingomyelin. Liberates the fatty acid from the sn-1 position of 1,2-diacyl-sn-glycero-3-phosphocholine mainly, indicating phospholipase activity of the A1 type. In addition to acting as an allergen, it possesses a moderate hemolytic activity on red blood cells of mice (3% of hemolysis at 3.0 ug/ml). The sequence is that of Phospholipase A1 verutoxin-1 from Vespa velutina (Asian yellow-legged hornet).